Here is a 1925-residue protein sequence, read N- to C-terminus: Plexin-D1 (1925 aa).

Residues 1–21 are compositionally biased toward low complexity; sequence MARRAAGGAPPSARAAAAVPL. The interval 1-26 is disordered; that stretch reads MARRAAGGAPPSARAAAAVPLRPRPH. Positions 1–48 are cleaved as a signal peptide; that stretch reads MARRAAGGAPPSARAAAAVPLRPRPHSRGPGLLPLPLLLLLGAARAGA. The region spanning 49 to 548 is the Sema domain; that stretch reads LEIQRRFPSP…TSHQMARVKV (500 aa). Over 49–1271 the chain is Extracellular; sequence LEIQRRFPSP…TLQLGGSETA (1223 aa). 2 disulfides stabilise this stretch: Cys-106–Cys-116 and Cys-142–Cys-150. N-linked (GlcNAc...) asparagine glycosylation is found at Asn-157 and Asn-226. 2 disulfide bridges follow: Cys-324/Cys-447 and Cys-347/Cys-391. Asn-483 carries an N-linked (GlcNAc...) asparagine glycan. 5 disulfides stabilise this stretch: Cys-551–Cys-568, Cys-557–Cys-602, Cys-560–Cys-577, Cys-571–Cys-583, and Cys-639–Cys-663. 3 consecutive IPT/TIG domains span residues 893–977, 983–1065, and 1071–1145; these read PEIR…SREQ, PTVH…NLTF, and PVIT…FING. An N-linked (GlcNAc...) asparagine glycan is attached at Asn-967. Asn-1120 carries N-linked (GlcNAc...) asparagine glycosylation. Residues 1272–1292 form a helical membrane-spanning segment; it reads IVVSIVICSVLLLLSVVALFV. The Cytoplasmic portion of the chain corresponds to 1293 to 1925; it reads FCTKSRRAER…NNIYECYSEA (633 aa).

Belongs to the plexin family. Interacts with NRP1 and SEMA4A. Interacts with SH3BP1; they dissociate upon SEMA3E binding to PLXND1 allowing SH3BP1 to transduce downstream signal through RAC1 inactivation. In terms of tissue distribution, detected in embryonic heart and vascular endothelium, brain, dorsal root ganglia, adrenal gland, lung mesenchyme, small intestine and in the ossification centers of vertebral bodies.

It localises to the cell membrane. Its subcellular location is the cell projection. The protein localises to the lamellipodium membrane. Cell surface receptor for SEMA4A and for class 3 semaphorins, such as SEMA3A, SEMA3C and SEMA3E. Plays an important role in cell-cell signaling, and in regulating the migration of a wide spectrum of cell types. Regulates the migration of thymocytes in the medulla. Regulates endothelial cell migration. Plays an important role in ensuring the specificity of synapse formation. Mediates anti-angiogenic signaling in response to SEMA3E. Required for normal development of the heart and vasculature. This is Plexin-D1 (Plxnd1) from Mus musculus (Mouse).